Here is a 229-residue protein sequence, read N- to C-terminus: MSLLAQLDQKIAANGGLIVSCQPVPDSPLDKPEIVAAMALAAEQAGAVAIRIEGVANQQATRAVVSVPIIGIVKRDLEDSPVRITAYIEDVDALAQAGADIIAIDGTDRPRPVPVETLLARIHHHGLLAMTDCSTPEDGLACQKLGAEIIGTTLSGYTTPETPEEPDLALVKTLSDAGCRVIAEGRYNTPAQAADAMRHGAWAVTVGSAITRLEHICQWYNTAMKKAVL.

The protein belongs to the NanE family.

The enzyme catalyses an N-acyl-D-glucosamine 6-phosphate = an N-acyl-D-mannosamine 6-phosphate. It functions in the pathway amino-sugar metabolism; N-acetylneuraminate degradation; D-fructose 6-phosphate from N-acetylneuraminate: step 3/5. Functionally, converts N-acetylmannosamine-6-phosphate (ManNAc-6-P) to N-acetylglucosamine-6-phosphate (GlcNAc-6-P). This Escherichia coli O139:H28 (strain E24377A / ETEC) protein is Putative N-acetylmannosamine-6-phosphate 2-epimerase.